Consider the following 465-residue polypeptide: Monogalactosyldiacylglycerol synthase 3, chloroplastic (465 aa).

UDP contacts are provided by residues histidine 86, arginine 255, 365 to 369, and glutamate 387; that span reads GTIAE.

The protein belongs to the glycosyltransferase 28 family. Expressed mainly in roots. Detected in flowers, leaves, stems, siliques and pollen tubes.

It is found in the plastid. Its subcellular location is the chloroplast outer membrane. It catalyses the reaction a 1,2-diacyl-sn-glycerol + UDP-alpha-D-galactose = a 1,2-diacyl-3-O-(beta-D-galactosyl)-sn-glycerol + UDP + H(+). The catalysed reaction is 1,2-di-(9Z,12Z-octadecadienoyl)-sn-glycerol + UDP-alpha-D-galactose = 1,2-di-(9Z,12Z-octadecadienoyl)-3-beta-D-galactosyl-sn-glycerol + UDP + H(+). It carries out the reaction 1-(9Z-octadecenoyl)-2-hexadecanoyl-sn-glycerol + UDP-alpha-D-galactose = 1-(9Z-octadecenoyl)-2-hexadecanoyl-3-beta-D-galactosyl-sn-glycerol + UDP + H(+). The enzyme catalyses 1,2-di-(9Z-octadecenoyl)-sn-glycerol + UDP-alpha-D-galactose = 1,2-di-(9Z-octadecenoyl)-3-beta-D-galactosyl-sn-glycerol + UDP + H(+). With respect to regulation, inhibited by galvestine-1. In terms of biological role, involved in the synthesis of monogalactosyldiacylglycerol, the major structural component of photosynthetic membranes and in the chloroplast envelope biogenesis. Can use both prokaryotic (18:1/16:0) or eukaryotic (18:2/18:2) 1,2-diacylglycerol species, but operates with some preference for the eukaryotic one. Plays a minor role in galactolipid synthesis in chloroplasts. Is essential for membrane lipid remodeling in phosphate-starved roots. Acts as the major factor involved in digalactosyldiacylglycerol (DGDG) biosynthesis in phosphate-starved roots. Does not seem to be required for plant growth under nutrient-sufficient conditions. Required for membrane lipid remodeling in plants grown in acidic conditions. This is Monogalactosyldiacylglycerol synthase 3, chloroplastic from Arabidopsis thaliana (Mouse-ear cress).